The chain runs to 408 residues: Acetate kinase (408 aa).

Asn7 contributes to the Mg(2+) binding site. Lys14 serves as a coordination point for ATP. Arg91 is a substrate binding site. The Proton donor/acceptor role is filled by Asp148. Residues 208–212 (HLGNG), 283–285 (DFR), and 331–335 (GIGEN) each bind ATP. Glu384 serves as a coordination point for Mg(2+).

It belongs to the acetokinase family. Homodimer. Mg(2+) serves as cofactor. It depends on Mn(2+) as a cofactor.

The protein resides in the cytoplasm. It catalyses the reaction acetate + ATP = acetyl phosphate + ADP. It participates in metabolic intermediate biosynthesis; acetyl-CoA biosynthesis; acetyl-CoA from acetate: step 1/2. In terms of biological role, catalyzes the formation of acetyl phosphate from acetate and ATP. Can also catalyze the reverse reaction. This Methanosarcina acetivorans (strain ATCC 35395 / DSM 2834 / JCM 12185 / C2A) protein is Acetate kinase.